The following is a 401-amino-acid chain: Ribosomal protein uS12 methylthiotransferase RimO (401 aa).

In terms of domain architecture, MTTase N-terminal spans 1-108 (MKINFINLGC…GIELLQTPKR (108 aa)). [4Fe-4S] cluster is bound by residues Cys10, Cys43, Cys72, Cys124, Cys128, and Cys131. Residues 110–339 (LTTKHYAYLK…FNLSQEILEE (230 aa)) enclose the Radical SAM core domain.

It belongs to the methylthiotransferase family. RimO subfamily. The cofactor is [4Fe-4S] cluster.

It is found in the cytoplasm. The catalysed reaction is L-aspartate(89)-[ribosomal protein uS12]-hydrogen + (sulfur carrier)-SH + AH2 + 2 S-adenosyl-L-methionine = 3-methylsulfanyl-L-aspartate(89)-[ribosomal protein uS12]-hydrogen + (sulfur carrier)-H + 5'-deoxyadenosine + L-methionine + A + S-adenosyl-L-homocysteine + 2 H(+). Its function is as follows. Catalyzes the methylthiolation of an aspartic acid residue of ribosomal protein uS12. The chain is Ribosomal protein uS12 methylthiotransferase RimO from Hydrogenobaculum sp. (strain Y04AAS1).